A 509-amino-acid polypeptide reads, in one-letter code: 2,3-bisphosphoglycerate-independent phosphoglycerate mutase (509 aa).

Mn(2+) contacts are provided by Asp12 and Ser62. The Phosphoserine intermediate role is filled by Ser62. Residues His123, 153–154 (RD), Arg185, Arg191, 260–263 (RPDR), and Lys333 each bind substrate. The Mn(2+) site is built by Asp400, His404, Asp441, His442, and His460.

This sequence belongs to the BPG-independent phosphoglycerate mutase family. In terms of assembly, monomer. Mn(2+) serves as cofactor.

It catalyses the reaction (2R)-2-phosphoglycerate = (2R)-3-phosphoglycerate. Its pathway is carbohydrate degradation; glycolysis; pyruvate from D-glyceraldehyde 3-phosphate: step 3/5. Catalyzes the interconversion of 2-phosphoglycerate and 3-phosphoglycerate. This is 2,3-bisphosphoglycerate-independent phosphoglycerate mutase from Clostridium botulinum (strain ATCC 19397 / Type A).